We begin with the raw amino-acid sequence, 273 residues long: MAFEDIPFLQYLGNAVDILLVWYVIYKLIMVIRGTKAVQLLKGIVVIVLVRMASQYLGLSTLQWLMDQAITWGFLAIIIIFQPELRRALEQLGRGRFFSRSGTPVEEAQQKTIEAITKAINYMAKRRIGALLTIERDTGMGDYIETGIPLNAKVSSELLINIFIPNTPLHDGAVIMKNNEIAAAACYLPLSESPFISKELGTRHRAAVGISEVTDSLTIIVSEETGGVSVAKNGDLHRELTEEALKEMLEAEFKKNTRDTSSNRWYWRGKKNG.

3 consecutive transmembrane segments (helical) span residues L12–I32, L40–S60, and T61–F81. The region spanning Q82–E242 is the DAC domain.

Belongs to the adenylate cyclase family. DacA/CdaA subfamily. As to quaternary structure, probably a homodimer. Interacts with CdaR. May interact with GlmM.

Its subcellular location is the cell membrane. It carries out the reaction 2 ATP = 3',3'-c-di-AMP + 2 diphosphate. With respect to regulation, DAC activity is stimulated about 20-fold in E.coli by coexpression with CdaR. One of 3 paralogous diadenylate cyclases (DAC) in this bacteria, catalyzing the condensation of 2 ATP molecules into cyclic di-AMP (c-di-AMP). Upon expression in E.coli leads to c-di-AMP synthesis. Probably the main producer of c-di-AMP for the cell; is probably implicated in control of peptidoglycan synthesis. In B.subtilis c-di-AMP is a second messenger that mediates growth, DNA repair and cell wall homeostasis; it is toxic when present in excess. The chain is Cyclic di-AMP synthase CdaA from Bacillus subtilis (strain 168).